Consider the following 172-residue polypeptide: Putative RNA polymerase II transcriptional coactivator (172 aa).

Disordered stretches follow at residues 1–43 (MPPK…QDGN) and 123–172 (QTDA…DDDE). Residues 24–43 (GNTGKAQPQELTKGSDQDGN) are compositionally biased toward polar residues. Over residues 131-144 (PKVKALESNKESIK) the composition is skewed to basic and acidic residues. Acidic residues predominate over residues 158 to 172 (TSDEEEAAEDEDDDE).

It belongs to the transcriptional coactivator PC4 family.

The protein resides in the nucleus. Its function is as follows. General coactivator that functions cooperatively with TAFs and mediates functional interactions between upstream activators and the general transcriptional machinery. Binds single-stranded DNA. In Neurospora crassa (strain ATCC 24698 / 74-OR23-1A / CBS 708.71 / DSM 1257 / FGSC 987), this protein is Putative RNA polymerase II transcriptional coactivator.